A 299-amino-acid polypeptide reads, in one-letter code: Protein phosphatase 1 regulatory subunit 3D (299 aa).

The segment at 1 to 22 (MSRGPSSAVLPSALGSRKLGPR) is disordered. Phosphoserine is present on residues S23, S25, and S28. The disordered stretch occupies residues 37–94 (EPRACRPPGSPGRAPPPTPAPSGCDPRLRPIILRRARSLPSSPERRQKAAGAPGAACR). A compositionally biased stretch (pro residues) spans 44-56 (PGSPGRAPPPTPA). Positions 57–67 (PSGCDPRLRPI) are enriched in low complexity. The residue at position 74 (S74) is a Phosphoserine. The segment covering 85–94 (AAGAPGAACR) has biased composition (low complexity). The short motif at 101 to 104 (LRVR) is the PP1-binding motif element. The residue at position 133 (S133) is a Phosphoserine. In terms of domain architecture, CBM21 spans 169–278 (GERLQRQLVC…NNDHRDYSLT (110 aa)).

Interacts with PPP1CC catalytic subunit of PP1, and associates with glycogen. Interacts with EPM2A; in the presence of NHLC1/malin the interaction leads to PPP1R3D ubiquitination and autophagic degradation. In terms of tissue distribution, expressed in all tissues tested. High expression in skeletal muscle and heart.

Its function is as follows. Seems to act as a glycogen-targeting subunit for PP1. PP1 is essential for cell division, and participates in the regulation of glycogen metabolism, muscle contractility and protein synthesis. This Homo sapiens (Human) protein is Protein phosphatase 1 regulatory subunit 3D (PPP1R3D).